Reading from the N-terminus, the 241-residue chain is 2-C-methyl-D-erythritol 4-phosphate cytidylyltransferase (241 aa).

This sequence belongs to the IspD/TarI cytidylyltransferase family. IspD subfamily.

It catalyses the reaction 2-C-methyl-D-erythritol 4-phosphate + CTP + H(+) = 4-CDP-2-C-methyl-D-erythritol + diphosphate. Its pathway is isoprenoid biosynthesis; isopentenyl diphosphate biosynthesis via DXP pathway; isopentenyl diphosphate from 1-deoxy-D-xylulose 5-phosphate: step 2/6. Catalyzes the formation of 4-diphosphocytidyl-2-C-methyl-D-erythritol from CTP and 2-C-methyl-D-erythritol 4-phosphate (MEP). The polypeptide is 2-C-methyl-D-erythritol 4-phosphate cytidylyltransferase (Baumannia cicadellinicola subsp. Homalodisca coagulata).